Here is a 357-residue protein sequence, read N- to C-terminus: Chorismate synthase (357 aa).

Positions 48 and 54 each coordinate NADP(+). Residues 125-127 (RSS), 243-244 (NA), Gly-283, 298-302 (KPTSS), and Arg-324 contribute to the FMN site.

It belongs to the chorismate synthase family. As to quaternary structure, homotetramer. FMNH2 serves as cofactor.

The enzyme catalyses 5-O-(1-carboxyvinyl)-3-phosphoshikimate = chorismate + phosphate. The protein operates within metabolic intermediate biosynthesis; chorismate biosynthesis; chorismate from D-erythrose 4-phosphate and phosphoenolpyruvate: step 7/7. Functionally, catalyzes the anti-1,4-elimination of the C-3 phosphate and the C-6 proR hydrogen from 5-enolpyruvylshikimate-3-phosphate (EPSP) to yield chorismate, which is the branch point compound that serves as the starting substrate for the three terminal pathways of aromatic amino acid biosynthesis. This reaction introduces a second double bond into the aromatic ring system. This Pasteurella multocida (strain Pm70) protein is Chorismate synthase.